Reading from the N-terminus, the 590-residue chain is Acetolactate synthase large subunit (590 aa).

Glutamate 61 is a binding site for thiamine diphosphate. FAD-binding positions include arginine 163, 271–292, and 314–333; these read HGTAYANFAVSECDLLIALGAR and DIDPAEVGKNRIPQVAIVGD. The segment at 405–484 is thiamine pyrophosphate binding; sequence QHQMWSAQFL…IKIVIINNRW (80 aa). 2 residues coordinate Mg(2+): aspartate 455 and asparagine 482.

This sequence belongs to the TPP enzyme family. Dimer of large and small chains. The cofactor is Mg(2+). It depends on thiamine diphosphate as a cofactor.

Its subcellular location is the plastid. It localises to the chloroplast. The catalysed reaction is 2 pyruvate + H(+) = (2S)-2-acetolactate + CO2. Its pathway is amino-acid biosynthesis; L-isoleucine biosynthesis; L-isoleucine from 2-oxobutanoate: step 1/4. It functions in the pathway amino-acid biosynthesis; L-valine biosynthesis; L-valine from pyruvate: step 1/4. In Porphyra purpurea (Red seaweed), this protein is Acetolactate synthase large subunit (ilvB).